We begin with the raw amino-acid sequence, 120 residues long: Large ribosomal subunit protein eL8 (120 aa).

It belongs to the eukaryotic ribosomal protein eL8 family. Part of the 50S ribosomal subunit. Probably part of the RNase P complex.

It is found in the cytoplasm. Functionally, multifunctional RNA-binding protein that recognizes the K-turn motif in ribosomal RNA, the RNA component of RNase P, box H/ACA, box C/D and box C'/D' sRNAs. The sequence is that of Large ribosomal subunit protein eL8 from Halobacterium salinarum (strain ATCC 29341 / DSM 671 / R1).